A 92-amino-acid chain; its full sequence is Acylphosphatase (92 aa).

In terms of domain architecture, Acylphosphatase-like spans 5–92 (CIAAYVYGVV…ADFQGFSIRY (88 aa)). Active-site residues include arginine 20 and asparagine 38.

The protein belongs to the acylphosphatase family.

The catalysed reaction is an acyl phosphate + H2O = a carboxylate + phosphate + H(+). The chain is Acylphosphatase (acyP) from Serratia proteamaculans (strain 568).